Consider the following 213-residue polypeptide: Serine acetyltransferase (213 aa).

This sequence belongs to the transferase hexapeptide repeat family.

The protein localises to the cytoplasm. The enzyme catalyses L-serine + acetyl-CoA = O-acetyl-L-serine + CoA. The protein operates within amino-acid biosynthesis; L-cysteine biosynthesis; L-cysteine from L-serine: step 1/2. The protein is Serine acetyltransferase (cysE) of Staphylococcus epidermidis (strain ATCC 35984 / DSM 28319 / BCRC 17069 / CCUG 31568 / BM 3577 / RP62A).